The following is a 264-amino-acid chain: 3-methyl-2-oxobutanoate hydroxymethyltransferase (264 aa).

Residues Asp-45 and Asp-84 each coordinate Mg(2+). 3-methyl-2-oxobutanoate contacts are provided by residues 45-46 (DS), Asp-84, and Lys-112. Mg(2+) is bound at residue Glu-114. Glu-181 serves as the catalytic Proton acceptor.

Belongs to the PanB family. Homodecamer; pentamer of dimers. Mg(2+) serves as cofactor.

Its subcellular location is the cytoplasm. The enzyme catalyses 3-methyl-2-oxobutanoate + (6R)-5,10-methylene-5,6,7,8-tetrahydrofolate + H2O = 2-dehydropantoate + (6S)-5,6,7,8-tetrahydrofolate. It participates in cofactor biosynthesis; (R)-pantothenate biosynthesis; (R)-pantoate from 3-methyl-2-oxobutanoate: step 1/2. Catalyzes the reversible reaction in which hydroxymethyl group from 5,10-methylenetetrahydrofolate is transferred onto alpha-ketoisovalerate to form ketopantoate. The chain is 3-methyl-2-oxobutanoate hydroxymethyltransferase from Shewanella amazonensis (strain ATCC BAA-1098 / SB2B).